We begin with the raw amino-acid sequence, 281 residues long: Nhr-229 coiled coil domain containing nccd-1 (281 aa).

This chain is Nhr-229 coiled coil domain containing nccd-1, found in Caenorhabditis elegans.